A 524-amino-acid chain; its full sequence is Nucleoporin NUP56 (524 aa).

Positions 1–219 are disordered; sequence MADDPHNTST…SSMAKFASST (219 aa). Basic and acidic residues-rich tracts occupy residues 28–80, 114–168, and 179–199; these read VKED…EPEK, THDE…KEVE, and SAEK…KVDK. Positions 37-44 match the Nuclear localization signal motif; sequence ARRELKQT. Residues 111 to 133 adopt a coiled-coil conformation; it reads KKRTHDELEQDGKEEEEKKEGEK. Positions 200–219 are enriched in polar residues; sequence PQTSSSAFANSSMAKFASST. FG repeat units lie at residues 223–224, 226–227, 237–238, 247–248, 266–267, 312–313, and 328–329; these read FG. 2 disordered regions span residues 247–284 and 300–371; these read FGSK…QAGG and GSSA…GEEK. Low complexity predominate over residues 248-277; sequence GSKSADASAAPAGPPKLSFGSASAASPFAS. Composition is skewed to acidic residues over residues 332-345 and 352-362; these read ESDE…EEGE and GEGEEKEEEEK. A coiled-coil region spans residues 345–376; sequence EENKSENGEGEEKEEEEKEEKASGEEKKKFKL. The RanBD1 domain occupies 377–475; it reads QKVHIDDGEG…TPILPAMKFQ (99 aa). Residues 503-524 are a coiled coil; sequence SQANATQFSNMVEKIKEKLAAA.

As to quaternary structure, the nuclear pore complex (NPC) constitutes the exclusive means of nucleocytoplasmic transport. NPCs allow the passive diffusion of ions and small molecules and the active, nuclear transport receptor-mediated bidirectional transport of macromolecules such as proteins, RNAs, ribonucleoparticles (RNPs), and ribosomal subunits across the nuclear envelope. The 55-60 MDa NPC is composed of at least 28 different subunits: AMO1, ELYS, GLE1, GLE2, MLP1, NDC1, NIC96, NSP1, NUP133, NUP145, NUP152, NUP159, NUP170, NUP188, NUP192, NUP37, NUP49, NUP53, NUP56, NUP57, NUP82, NUP84, NUP85, POM152, POM33, POM34, SEC13 and SEH1. Due to its 8-fold rotational symmetry, all subunits are present with 8 copies or multiples thereof.

The protein resides in the nucleus. It is found in the nuclear pore complex. The protein localises to the nucleus membrane. Functionally, functions as a component of the nuclear pore complex (NPC). NPC components, collectively referred to as nucleoporins (NUPs), can play the role of both NPC structural components and of docking or interaction partners for transiently associated nuclear transport factors. Active directional transport is assured by both, a Phe-Gly (FG) repeat affinity gradient for these transport factors across the NPC and a transport cofactor concentration gradient across the nuclear envelope (GSP1 and GSP2 GTPases associated predominantly with GTP in the nucleus, with GDP in the cytoplasm). The protein is Nucleoporin NUP56 (NUP56) of Chaetomium thermophilum (strain DSM 1495 / CBS 144.50 / IMI 039719) (Thermochaetoides thermophila).